Reading from the N-terminus, the 221-residue chain is UPF0758 protein PC1_4100 (221 aa).

One can recognise an MPN domain in the interval 99–221 (AMLNPQATGQ…YVSFAERGWI (123 aa)). His-170, His-172, and Asp-183 together coordinate Zn(2+). The JAMM motif signature appears at 170–183 (HNHPSGKAEPSQAD).

This sequence belongs to the UPF0758 family. YicR subfamily.

This Pectobacterium carotovorum subsp. carotovorum (strain PC1) protein is UPF0758 protein PC1_4100.